Consider the following 1863-residue polypeptide: Transient receptor potential cation channel subfamily M member 7 (1863 aa).

Methionine 1 carries the N-acetylmethionine modification. The Cytoplasmic portion of the chain corresponds to 1–850 (MSQKSWIEST…ITRKFYAFYH (850 aa)). Residue serine 101 is modified to Phosphoserine. Residues 544-555 (NRRSGRNTSSST) are compositionally biased toward low complexity. Residues 544-574 (NRRSGRNTSSSTPQLRKSHETFGNRADKKEK) form a disordered region. The span at 560–573 (KSHETFGNRADKKE) shows a compositional bias: basic and acidic residues. Residues 851-876 (APIVKFWFNTLAYLGFLMLYTFVVLV) traverse the membrane as a helical segment. Residues 877 to 882 (KMEQLP) are Extracellular-facing. A helical membrane pass occupies residues 883-904 (SVQEWIVIAYIFTYAIEKVREV). Residues 905-923 (FMSEAGKISQKIKVWFSDY) lie on the Cytoplasmic side of the membrane. Residues 924 to 943 (FNVSDTIAIISFFVGFGLRF) form a helical membrane-spanning segment. Topologically, residues 944 to 956 (GAKWNYINAYDNH) are extracellular. A helical transmembrane segment spans residues 957–980 (VFVAGRLIYCLNIIFWYVRLLDFL). The Cytoplasmic portion of the chain corresponds to 981-999 (AVNQQAGPYVMMIGKMVAN). Residues 1000–1023 (MFYIVVIMALVLLSFGVPRKAILY) form a helical membrane-spanning segment. Over 1024–1025 (PH) the chain is Extracellular. Residues 1026–1066 (EEPSWSLAKDIVFHPYWMIFGEVYAYEIDVCANDSTLPTIC) constitute an intramembrane region (pore-forming). The Extracellular segment spans residues 1067–1069 (GPG). Residues 1070-1098 (TWLTPFLQAVYLFVQYIIMVNLLIAFFNN) form a helical membrane-spanning segment. At 1099-1863 (VYLQVKAISN…EATNSVRLML (765 aa)) the chain is on the cytoplasmic side. 3 S-palmitoyl cysteine lipidation sites follow: cysteine 1143, cysteine 1144, and cysteine 1146. Threonine 1163 bears the Phosphothreonine mark. 5 positions are modified to phosphoserine: serine 1191, serine 1193, serine 1224, serine 1255, and serine 1258. The stretch at 1198-1250 (RVTFERVEQMSIQIKEVGDRVNYIKRSLQSLDSQIGHLQDLSALTVDTLKTLT) forms a coiled coil. Phosphothreonine is present on threonine 1265. Phosphoserine is present on residues serine 1300, serine 1357, serine 1360, serine 1385, serine 1386, serine 1389, serine 1394, serine 1395, and serine 1403. Positions 1380 to 1418 (NQKLGSSPNSSPHMSSPPTKFSVSTPSQPSCKSHLESTT) are disordered. The segment covering 1385 to 1397 (SSPNSSPHMSSPP) has biased composition (low complexity). The segment covering 1398 to 1410 (TKFSVSTPSQPSC) has biased composition (polar residues). Threonine 1404 carries the phosphothreonine modification. Phosphoserine is present on residues serine 1406 and serine 1445. The residue at position 1454 (threonine 1454) is a Phosphothreonine. Residue serine 1455 is modified to Phosphoserine. Threonine 1466 and threonine 1470 each carry phosphothreonine. Phosphoserine occurs at positions 1491, 1498, 1502, 1511, 1525, and 1531. The disordered stretch occupies residues 1498–1539 (SRRASTEDSPEVDSKAALLPDWLRDRPSNREMPSEGGTLNGL). Residues 1519–1530 (WLRDRPSNREMP) are compositionally biased toward basic and acidic residues. Threonine 1535 is subject to Phosphothreonine. Residue serine 1541 is modified to Phosphoserine. A Phosphothreonine modification is found at threonine 1549. Phosphoserine is present on residues serine 1565 and serine 1567. A Phosphothreonine modification is found at threonine 1581. In terms of domain architecture, Alpha-type protein kinase spans 1592–1822 (ILNNSMSSWS…CCRKLKLPDL (231 aa)). Phosphoserine occurs at positions 1596 and 1613. 5 residues coordinate ADP: glycine 1619, glycine 1620, leucine 1621, arginine 1622, and lysine 1646. Serine 1658 carries the phosphoserine modification. Threonine 1683 carries the post-translational modification Phosphothreonine. 3 residues coordinate ADP: glutamate 1718, glutamate 1719, and methionine 1721. Zn(2+) is bound at residue histidine 1751. The active-site Proton acceptor is aspartate 1765. Position 1775 (aspartate 1775) interacts with ADP. A Phosphoserine modification is found at serine 1777. Histidine 1808, cysteine 1810, and cysteine 1814 together coordinate Zn(2+). Threonine 1828 is modified (phosphothreonine). The interval 1838–1863 (ESSDLNLQSGNSTKESEATNSVRLML) is disordered. The span at 1841–1863 (DLNLQSGNSTKESEATNSVRLML) shows a compositional bias: polar residues. 3 positions are modified to phosphoserine: serine 1846, serine 1849, and serine 1858.

In the C-terminal section; belongs to the protein kinase superfamily. Alpha-type protein kinase family. ALPK subfamily. It in the N-terminal section; belongs to the transient receptor (TC 1.A.4) family. LTrpC subfamily. TRPM7 sub-subfamily. Homodimer. Homotetramer. Forms heteromers with TRPM6; heteromeric channels are functionally different from the homomeric channels. Interacts with PLCB1. Requires Zn(2+) as cofactor. Post-translationally, palmitoylated; palmitoylation at Cys-1143, Cys-1144 and Cys-1146 promotes TRPM7 trafficking from the Golgi to the surface membrane. In terms of processing, autophosphorylated; autophosphorylation regulates TRPM7 kinase activity towards its substrates. The C-terminal kinase domain can be cleaved from the channel segment in a cell-type-specific fashion. TRPM7 is cleaved by caspase-8, dissociating the kinase from the ion-conducting pore. The cleaved kinase fragments (M7CKs) can translocate to the cell nucleus and binds chromatin-remodeling complex proteins in a Zn(2+)-dependent manner to ultimately phosphorylate specific Ser/Thr residues of histones. As to expression, found to be expressed in brain and skeletal muscle, with stronger signals in kidney, heart, liver and spleen.

Its subcellular location is the cell membrane. It is found in the cytoplasmic vesicle membrane. It localises to the nucleus. The enzyme catalyses L-seryl-[protein] + ATP = O-phospho-L-seryl-[protein] + ADP + H(+). It carries out the reaction L-threonyl-[protein] + ATP = O-phospho-L-threonyl-[protein] + ADP + H(+). It catalyses the reaction Mg(2+)(in) = Mg(2+)(out). The catalysed reaction is Ca(2+)(in) = Ca(2+)(out). The enzyme catalyses Zn(2+)(in) = Zn(2+)(out). With respect to regulation, channel displays constitutive activity. Channel activity is negatively regulated by cytosolic Mg(2+), Mg-ATP and low intracellular pH. Resting free cytosolic Mg(2+) and Mg-ATP concentrations seem to be sufficient to block native TRPM7 channel activity. TRPM7 channel activity is highly dependent on membrane levels of phosphatidylinositol 4,5 bisphosphate (PIP2). PIP2 hydrolysis negatively regulates TRPM7 channel activity. TRPM7 kinase activity does not affect channel activity. The kinase activity is controlled through the autophosphorylation of a serine/threonine-rich region located N-terminal to the catalytic domain. In terms of biological role, bifunctional protein that combines an ion channel with an intrinsic kinase domain, enabling it to modulate cellular functions either by conducting ions through the pore or by phosphorylating downstream proteins via its kinase domain. The channel is highly permeable to divalent cations, specifically calcium (Ca2+), magnesium (Mg2+) and zinc (Zn2+) and mediates their influx. Controls a wide range of biological processes such as Ca2(+), Mg(2+) and Zn(2+) homeostasis, vesicular Zn(2+) release channel and intracellular Ca(2+) signaling, embryonic development, immune responses, cell motility, proliferation and differentiation. The C-terminal alpha-kinase domain autophosphorylates cytoplasmic residues of TRPM7. TRPM7 phosphorylates SMAD2, suggesting that TRPM7 kinase may play a role in activating SMAD signaling pathways. In vitro, TRPM7 kinase phosphorylates ANXA1 (annexin A1), myosin II isoforms and a variety of proteins with diverse cellular functions. Its function is as follows. The cleaved channel exhibits substantially higher current and potentiates Fas receptor signaling. Functionally, the C-terminal kinase domain can be cleaved from the channel segment in a cell-type-specific fashion. In immune cells, the TRPM7 kinase domain is clipped from the channel domain by caspases in response to Fas-receptor stimulation. The cleaved kinase fragments can translocate to the nucleus, and bind chromatin-remodeling complex proteins in a Zn(2+)-dependent manner to ultimately phosphorylate specific Ser/Thr residues of histones known to be functionally important for cell differentiation and embryonic development. The protein is Transient receptor potential cation channel subfamily M member 7 (Trpm7) of Mus musculus (Mouse).